A 293-amino-acid polypeptide reads, in one-letter code: Glutamyl-Q tRNA(Asp) synthetase (293 aa).

Residues 8-12 (RFAPT) and E44 each bind L-glutamate. Residues 11–21 (PTPSGYLHFGS) carry the 'HIGH' region motif. Residues C100, C102, Y114, and C118 each contribute to the Zn(2+) site. Residues Y171 and R189 each contribute to the L-glutamate site. The short motif at 227–231 (KLGKS) is the 'KMSKS' region element. K230 is an ATP binding site.

This sequence belongs to the class-I aminoacyl-tRNA synthetase family. GluQ subfamily. Zn(2+) is required as a cofactor.

Its function is as follows. Catalyzes the tRNA-independent activation of glutamate in presence of ATP and the subsequent transfer of glutamate onto a tRNA(Asp). Glutamate is transferred on the 2-amino-5-(4,5-dihydroxy-2-cyclopenten-1-yl) moiety of the queuosine in the wobble position of the QUC anticodon. In Pseudomonas paraeruginosa (strain DSM 24068 / PA7) (Pseudomonas aeruginosa (strain PA7)), this protein is Glutamyl-Q tRNA(Asp) synthetase.